A 594-amino-acid chain; its full sequence is A-type ATP synthase subunit A (594 aa).

An ATP-binding site is contributed by 236-243 (GPFGSGKT).

The protein belongs to the ATPase alpha/beta chains family. In terms of assembly, has multiple subunits with at least A(3), B(3), C, D, E, F, H, I and proteolipid K(x).

Its subcellular location is the cell membrane. It catalyses the reaction ATP + H2O + 4 H(+)(in) = ADP + phosphate + 5 H(+)(out). Component of the A-type ATP synthase that produces ATP from ADP in the presence of a proton gradient across the membrane. The A chain is the catalytic subunit. The polypeptide is A-type ATP synthase subunit A (Pyrobaculum calidifontis (strain DSM 21063 / JCM 11548 / VA1)).